A 1322-amino-acid polypeptide reads, in one-letter code: WD repeat-containing protein 17 (1322 aa).

WD repeat units lie at residues 81 to 121 (EHKK…VIAK), 123 to 164 (DSTK…SGVI), 171 to 211 (SFLS…QKHV), 221 to 261 (DEED…CITT), and 266 to 307 (SAAA…PIDN). The interval 328-352 (KFSVQSPTKNHYTSSTSEAVPPPTL) is disordered. Residues 330–345 (SVQSPTKNHYTSSTSE) are compositionally biased toward polar residues. WD repeat units lie at residues 391 to 431 (GHVE…AVYT), 434 to 474 (GNEG…IIQR), 478 to 518 (HGTN…LHKY), 519 to 559 (KHPA…DQPL), 564 to 604 (GHTA…CINI), 607 to 647 (GHTA…CVDT), and 650 to 690 (DHGA…TPVQ).

The chain is WD repeat-containing protein 17 (WDR17) from Homo sapiens (Human).